We begin with the raw amino-acid sequence, 67 residues long: Protein C' (67 aa).

Belongs to the rhabdoviruses C protein family.

Seems to stimulates transcription by the viral polymerase. May play a role in viral pathogenesis or transmission by insects vectors. The polypeptide is Protein C' (P) (Aedes (Bovine)).